The chain runs to 126 residues: MAGSKCLALIAHDQKKDDMAAFARANQELLSRWKIVATGTTGGRVLDAAPDLDVTRLKSGPLGGDQQIGALISTGEVDALIFFVDPLTPMPHDVDVKALMRLAIVYDIPMALNHATAIKLLPTLEA.

In terms of domain architecture, MGS-like spans M1–A126. Residues H12, K16, T38–T41, and S59–G60 each bind substrate. Catalysis depends on D65, which acts as the Proton donor/acceptor. Residue H92 coordinates substrate.

It belongs to the methylglyoxal synthase family.

The enzyme catalyses dihydroxyacetone phosphate = methylglyoxal + phosphate. Catalyzes the formation of methylglyoxal from dihydroxyacetone phosphate. The polypeptide is Methylglyoxal synthase (Rhizobium etli (strain ATCC 51251 / DSM 11541 / JCM 21823 / NBRC 15573 / CFN 42)).